Here is a 359-residue protein sequence, read N- to C-terminus: Peptide chain release factor 1 (359 aa).

The residue at position 236 (Gln236) is an N5-methylglutamine.

Belongs to the prokaryotic/mitochondrial release factor family. Post-translationally, methylated by PrmC. Methylation increases the termination efficiency of RF1.

Its subcellular location is the cytoplasm. Peptide chain release factor 1 directs the termination of translation in response to the peptide chain termination codons UAG and UAA. This Streptococcus pneumoniae (strain Hungary19A-6) protein is Peptide chain release factor 1.